Reading from the N-terminus, the 398-residue chain is NADH-quinone oxidoreductase subunit D (398 aa).

The protein belongs to the complex I 49 kDa subunit family. As to quaternary structure, NDH-1 is composed of 14 different subunits. Subunits NuoB, C, D, E, F, and G constitute the peripheral sector of the complex.

It is found in the cell inner membrane. It carries out the reaction a quinone + NADH + 5 H(+)(in) = a quinol + NAD(+) + 4 H(+)(out). Its function is as follows. NDH-1 shuttles electrons from NADH, via FMN and iron-sulfur (Fe-S) centers, to quinones in the respiratory chain. The immediate electron acceptor for the enzyme in this species is believed to be ubiquinone. Couples the redox reaction to proton translocation (for every two electrons transferred, four hydrogen ions are translocated across the cytoplasmic membrane), and thus conserves the redox energy in a proton gradient. The chain is NADH-quinone oxidoreductase subunit D from Anaplasma marginale (strain St. Maries).